The primary structure comprises 355 residues: Alpha-N-acetylneuraminide alpha-2,8-sialyltransferase (355 aa).

Topologically, residues 1–28 (MSPCGRALHTSRGAMAMLARKFPRTRLP) are cytoplasmic. Residues 29-47 (VGASALCVVVLCWLYIFPV) traverse the membrane as a helical; Signal-anchor for type II membrane protein segment. Over 48–355 (YRLPNEKEIV…CEEPSPQPTS (308 aa)) the chain is Lumenal. Residues asparagine 70 and asparagine 118 are each glycosylated (N-linked (GlcNAc...) asparagine). 2 disulfide bridges follow: cysteine 137–cysteine 286 and cysteine 151–cysteine 346. Residues asparagine 142 and asparagine 165 each coordinate CMP-N-acetyl-beta-neuraminate. N-linked (GlcNAc...) asparagine glycans are attached at residues asparagine 213 and asparagine 244. 5 residues coordinate CMP-N-acetyl-beta-neuraminate: serine 273, threonine 274, glycine 275, tryptophan 295, and histidine 309. Histidine 321 acts as the Proton donor/acceptor in catalysis.

Belongs to the glycosyltransferase 29 family.

It is found in the golgi apparatus membrane. It catalyses the reaction an N-acetyl-alpha-neuraminyl-(2-&gt;3)-beta-D-galactosyl derivative + CMP-N-acetyl-beta-neuraminate = an N-acetyl-alpha-neuraminyl-(2-&gt;8)-N-acetyl-alpha-neuraminyl-(2-&gt;3)-beta-D-galactosyl derivative + CMP + H(+). It carries out the reaction a ganglioside GM3 (d18:1(4E)) + CMP-N-acetyl-beta-neuraminate = a ganglioside GD3 (d18:1(4E)) + CMP + H(+). The enzyme catalyses a ganglioside GD3 (d18:1(4E)) + CMP-N-acetyl-beta-neuraminate = a ganglioside GT3 (d18:1(4E)) + CMP + H(+). The catalysed reaction is a ganglioside GD1a (d18:1(4E)) + CMP-N-acetyl-beta-neuraminate = a ganglioside GT1a (d18:1(4E)) + CMP + H(+). It catalyses the reaction a ganglioside GT1b (d18:1(4E)) + CMP-N-acetyl-beta-neuraminate = a ganglioside GQ1b (d18:1(4E)) + CMP + H(+). It carries out the reaction a ganglioside GM1b (d18:1(4E)) + CMP-N-acetyl-beta-neuraminate = a ganglioside GD1c (d18:1(4E)) + CMP + H(+). The enzyme catalyses a ganglioside GD3 + CMP-N-acetyl-beta-neuraminate = a ganglioside GT3 + CMP + H(+). The catalysed reaction is [alpha-N-acetylneuraminyl-(2-&gt;8)](n)-alpha-N-acetylneuraminyl-(2-&gt;8)-alpha-N-acetylneuraminyl-(2-&gt;3)-beta-D-galactosyl-(1-&gt;4)-beta-D-glucosyl-(1&lt;-&gt;1)-ceramide + CMP-N-acetyl-beta-neuraminate = [alpha-N-acetylneuraminyl-(2-&gt;8)](n+1)-alpha-N-acetylneuraminyl-(2-&gt;8)-alpha-N-acetylneuraminyl-(2-&gt;3)-beta-D-galactosyl-(1-&gt;4)-beta-D-glucosyl-(1&lt;-&gt;1)-ceramide + CMP + H(+). It participates in protein modification; protein glycosylation. It functions in the pathway lipid metabolism; sphingolipid metabolism. Catalyzes the addition of sialic acid in alpha 2,8-linkage to the sialic acid moiety of the ganglioside GM3 to form ganglioside GD3; gangliosides are a subfamily of complex glycosphingolipds that contain one or more residues of sialic acid. Can catalyze the addition of a second alpha-2,8- sialic acid to GD3 to form GT3. Can use GM1b, GD1a and GT1b as acceptor substrates to synthesize GD1c, GT1a and GQ1b respectively. The chain is Alpha-N-acetylneuraminide alpha-2,8-sialyltransferase from Mus musculus (Mouse).